A 236-amino-acid chain; its full sequence is 7-cyano-7-deazaguanine synthase (236 aa).

7 to 17 is a binding site for ATP; that stretch reads CSGGLDSVSLA. 4 residues coordinate Zn(2+): C185, C193, C196, and C199.

It belongs to the QueC family. Requires Zn(2+) as cofactor.

The catalysed reaction is 7-carboxy-7-deazaguanine + NH4(+) + ATP = 7-cyano-7-deazaguanine + ADP + phosphate + H2O + H(+). It participates in purine metabolism; 7-cyano-7-deazaguanine biosynthesis. Its function is as follows. Catalyzes the ATP-dependent conversion of 7-carboxy-7-deazaguanine (CDG) to 7-cyano-7-deazaguanine (preQ(0)). This Sinorhizobium fredii (strain NBRC 101917 / NGR234) protein is 7-cyano-7-deazaguanine synthase.